A 261-amino-acid chain; its full sequence is Segregation and condensation protein A (261 aa).

Belongs to the ScpA family. Component of a cohesin-like complex composed of ScpA, ScpB and the Smc homodimer, in which ScpA and ScpB bind to the head domain of Smc. The presence of the three proteins is required for the association of the complex with DNA.

Its subcellular location is the cytoplasm. Participates in chromosomal partition during cell division. May act via the formation of a condensin-like complex containing Smc and ScpB that pull DNA away from mid-cell into both cell halves. This is Segregation and condensation protein A from Leptospira interrogans serogroup Icterohaemorrhagiae serovar copenhageni (strain Fiocruz L1-130).